Here is a 567-residue protein sequence, read N- to C-terminus: Membrane protein insertase YidC (567 aa).

The chain crosses the membrane as a helical span at residues Ile3–Trp23. The interval Thr32–Asn80 is disordered. The span at Ser40 to Asp52 shows a compositional bias: low complexity. Residues Glu70–Asn80 are compositionally biased toward polar residues. 5 consecutive transmembrane segments (helical) span residues Phe354–Leu374, Trp378–Ala398, Gly445–Phe465, Met485–Leu505, and Pro522–Val542.

Belongs to the OXA1/ALB3/YidC family. Type 1 subfamily. In terms of assembly, interacts with the Sec translocase complex via SecD. Specifically interacts with transmembrane segments of nascent integral membrane proteins during membrane integration.

The protein localises to the cell inner membrane. Required for the insertion and/or proper folding and/or complex formation of integral membrane proteins into the membrane. Involved in integration of membrane proteins that insert both dependently and independently of the Sec translocase complex, as well as at least some lipoproteins. Aids folding of multispanning membrane proteins. The protein is Membrane protein insertase YidC of Marinobacter nauticus (strain ATCC 700491 / DSM 11845 / VT8) (Marinobacter aquaeolei).